The sequence spans 89 residues: Large ribosomal subunit protein bL27 (89 aa).

It belongs to the bacterial ribosomal protein bL27 family.

The sequence is that of Large ribosomal subunit protein bL27 from Bacteroides fragilis (strain ATCC 25285 / DSM 2151 / CCUG 4856 / JCM 11019 / LMG 10263 / NCTC 9343 / Onslow / VPI 2553 / EN-2).